We begin with the raw amino-acid sequence, 483 residues long: Glutamyl-tRNA(Gln) amidotransferase subunit A (483 aa).

Active-site charge relay system residues include Lys-76 and Ser-151. Ser-175 (acyl-ester intermediate) is an active-site residue.

The protein belongs to the amidase family. GatA subfamily. Heterotrimer of A, B and C subunits.

It carries out the reaction L-glutamyl-tRNA(Gln) + L-glutamine + ATP + H2O = L-glutaminyl-tRNA(Gln) + L-glutamate + ADP + phosphate + H(+). Its function is as follows. Allows the formation of correctly charged Gln-tRNA(Gln) through the transamidation of misacylated Glu-tRNA(Gln) in organisms which lack glutaminyl-tRNA synthetase. The reaction takes place in the presence of glutamine and ATP through an activated gamma-phospho-Glu-tRNA(Gln). The polypeptide is Glutamyl-tRNA(Gln) amidotransferase subunit A (Pseudomonas fluorescens (strain SBW25)).